The following is a 180-amino-acid chain: ATP synthase subunit delta (180 aa).

This sequence belongs to the ATPase delta chain family. F-type ATPases have 2 components, F(1) - the catalytic core - and F(0) - the membrane proton channel. F(1) has five subunits: alpha(3), beta(3), gamma(1), delta(1), epsilon(1). F(0) has three main subunits: a(1), b(2) and c(10-14). The alpha and beta chains form an alternating ring which encloses part of the gamma chain. F(1) is attached to F(0) by a central stalk formed by the gamma and epsilon chains, while a peripheral stalk is formed by the delta and b chains.

Its subcellular location is the cell inner membrane. In terms of biological role, f(1)F(0) ATP synthase produces ATP from ADP in the presence of a proton or sodium gradient. F-type ATPases consist of two structural domains, F(1) containing the extramembraneous catalytic core and F(0) containing the membrane proton channel, linked together by a central stalk and a peripheral stalk. During catalysis, ATP synthesis in the catalytic domain of F(1) is coupled via a rotary mechanism of the central stalk subunits to proton translocation. Its function is as follows. This protein is part of the stalk that links CF(0) to CF(1). It either transmits conformational changes from CF(0) to CF(1) or is implicated in proton conduction. The polypeptide is ATP synthase subunit delta (Legionella pneumophila (strain Paris)).